The primary structure comprises 487 residues: UDP-N-acetylmuramate--L-alanine ligase (487 aa).

Gly-129–Thr-135 contacts ATP.

It belongs to the MurCDEF family.

The protein localises to the cytoplasm. The enzyme catalyses UDP-N-acetyl-alpha-D-muramate + L-alanine + ATP = UDP-N-acetyl-alpha-D-muramoyl-L-alanine + ADP + phosphate + H(+). It participates in cell wall biogenesis; peptidoglycan biosynthesis. Its function is as follows. Cell wall formation. This Aliivibrio fischeri (strain ATCC 700601 / ES114) (Vibrio fischeri) protein is UDP-N-acetylmuramate--L-alanine ligase.